A 352-amino-acid chain; its full sequence is Extracellular minor metalloprotease (352 aa).

Disordered stretches follow at residues 41–86 (GNKP…QPRR) and 144–164 (TARS…ELTH). Residues 48 to 57 (PTEKNARAGE) are compositionally biased toward basic and acidic residues. Composition is skewed to low complexity over residues 71-85 (ARQT…QQPR) and 144-156 (TARS…SPST). Residue H160 participates in Zn(2+) binding. The active site involves E161. Residues H164 and E184 each contribute to the Zn(2+) site. H262 acts as the Proton donor in catalysis. The interval 303–325 (TPTSDHLRPRHGETRAGLRTKRG) is disordered. The segment covering 304 to 325 (PTSDHLRPRHGETRAGLRTKRG) has biased composition (basic and acidic residues).

The protein belongs to the peptidase M4 family. The cofactor is Zn(2+).

The protein localises to the secreted. The polypeptide is Extracellular minor metalloprotease (smp) (Serratia marcescens (strain ATCC 21074 / E-15)).